The chain runs to 123 residues: UPF0102 protein Maqu_2464 (123 aa).

Belongs to the UPF0102 family.

The protein is UPF0102 protein Maqu_2464 of Marinobacter nauticus (strain ATCC 700491 / DSM 11845 / VT8) (Marinobacter aquaeolei).